The sequence spans 217 residues: Uracil-DNA glycosylase (217 aa).

The Proton acceptor role is filled by aspartate 62.

Belongs to the uracil-DNA glycosylase (UDG) superfamily. UNG family.

Its subcellular location is the cytoplasm. It catalyses the reaction Hydrolyzes single-stranded DNA or mismatched double-stranded DNA and polynucleotides, releasing free uracil.. Excises uracil residues from the DNA which can arise as a result of misincorporation of dUMP residues by DNA polymerase or due to deamination of cytosine. This chain is Uracil-DNA glycosylase, found in Streptococcus mutans serotype c (strain ATCC 700610 / UA159).